A 126-amino-acid polypeptide reads, in one-letter code: Large ribosomal subunit protein bL19 (126 aa).

This sequence belongs to the bacterial ribosomal protein bL19 family.

Functionally, this protein is located at the 30S-50S ribosomal subunit interface and may play a role in the structure and function of the aminoacyl-tRNA binding site. This Dechloromonas aromatica (strain RCB) protein is Large ribosomal subunit protein bL19.